Consider the following 347-residue polypeptide: Transcription factor EC (347 aa).

The tract at residues 1 to 119 (MTLDHQIINP…GLTSASCPSS (119 aa)) is necessary for transcriptional transactivation. The 54-residue stretch at 139–192 (QKKDNHNLIERRRRYNINYRIKELGTLIPKSNDPDMRWNKGTILKASVEYIKWL) folds into the bHLH domain. The interval 271–347 (PSPELCDQAI…SFSSDDGDEL (77 aa)) is necessary for transcriptional transactivation. A disordered region spans residues 319-347 (DPLLSATSPAVSKESSRRSSFSSDDGDEL). Positions 326-341 (SPAVSKESSRRSSFSS) are enriched in low complexity.

The protein belongs to the MiT/TFE family. In terms of assembly, homodimer. Forms heterodimers with TFE3. Forms heterodimers with MITF. Interacts with MITF. Expressed moderately in spleen, kidney, bone marrow, small intestine and leukocytes. Expressed weakly in testis, trachea and colon.

The protein resides in the nucleus. Functionally, transcriptional regulator that acts as a repressor or an activator. Acts as a transcriptional repressor on minimal promoter containing element F (that includes an E-box sequence). Binds to element F in an E-box sequence-specific manner. Acts as a transcriptional transactivator on the proximal promoter region of the tartrate-resistant acid phosphatase (TRAP) E-box containing promoter. Collaborates with MITF in target gene activation. Acts as a transcriptional repressor on minimal promoter containing mu E3 enhancer sequence. Binds to mu E3 DNA sequence of the immunoglobulin heavy-chain gene enhancer. Binds DNA in a homo- or heterodimeric form. This is Transcription factor EC (TFEC) from Homo sapiens (Human).